The primary structure comprises 379 residues: UDP-4-amino-4-deoxy-L-arabinose--oxoglutarate aminotransferase (379 aa).

K182 bears the N6-(pyridoxal phosphate)lysine mark.

This sequence belongs to the DegT/DnrJ/EryC1 family. ArnB subfamily. Homodimer. It depends on pyridoxal 5'-phosphate as a cofactor.

It carries out the reaction UDP-4-amino-4-deoxy-beta-L-arabinose + 2-oxoglutarate = UDP-beta-L-threo-pentopyranos-4-ulose + L-glutamate. Its pathway is nucleotide-sugar biosynthesis; UDP-4-deoxy-4-formamido-beta-L-arabinose biosynthesis; UDP-4-deoxy-4-formamido-beta-L-arabinose from UDP-alpha-D-glucuronate: step 2/3. It functions in the pathway bacterial outer membrane biogenesis; lipopolysaccharide biosynthesis. In terms of biological role, catalyzes the conversion of UDP-4-keto-arabinose (UDP-Ara4O) to UDP-4-amino-4-deoxy-L-arabinose (UDP-L-Ara4N). The modified arabinose is attached to lipid A and is required for resistance to polymyxin and cationic antimicrobial peptides. The sequence is that of UDP-4-amino-4-deoxy-L-arabinose--oxoglutarate aminotransferase from Escherichia coli (strain ATCC 8739 / DSM 1576 / NBRC 3972 / NCIMB 8545 / WDCM 00012 / Crooks).